The primary structure comprises 324 residues: Uroporphyrinogen decarboxylase (324 aa).

Substrate is bound by residues 14–18 (RQAGR), F32, D63, Y136, S191, and H302.

It belongs to the uroporphyrinogen decarboxylase family. In terms of assembly, homodimer.

It localises to the cytoplasm. It carries out the reaction uroporphyrinogen III + 4 H(+) = coproporphyrinogen III + 4 CO2. The protein operates within porphyrin-containing compound metabolism; protoporphyrin-IX biosynthesis; coproporphyrinogen-III from 5-aminolevulinate: step 4/4. In terms of biological role, catalyzes the decarboxylation of four acetate groups of uroporphyrinogen-III to yield coproporphyrinogen-III. The polypeptide is Uroporphyrinogen decarboxylase (Neorickettsia sennetsu (strain ATCC VR-367 / Miyayama) (Ehrlichia sennetsu)).